Reading from the N-terminus, the 454-residue chain is tRNA modification GTPase MnmE (454 aa).

The (6S)-5-formyl-5,6,7,8-tetrahydrofolate site is built by Arg-23, Glu-80, and Lys-120. A TrmE-type G domain is found at Gly-216–Gly-377. Asn-226 contributes to the K(+) binding site. GTP-binding positions include Asn-226 to Ser-231, Thr-245 to Thr-251, Asp-270 to Gly-273, Asn-335 to Asp-338, and Ser-358 to Arg-360. Mg(2+) is bound at residue Ser-230. Thr-245, Ile-247, and Thr-250 together coordinate K(+). Thr-251 contributes to the Mg(2+) binding site. A (6S)-5-formyl-5,6,7,8-tetrahydrofolate-binding site is contributed by Lys-454.

It belongs to the TRAFAC class TrmE-Era-EngA-EngB-Septin-like GTPase superfamily. TrmE GTPase family. Homodimer. Heterotetramer of two MnmE and two MnmG subunits. The cofactor is K(+).

The protein resides in the cytoplasm. Functionally, exhibits a very high intrinsic GTPase hydrolysis rate. Involved in the addition of a carboxymethylaminomethyl (cmnm) group at the wobble position (U34) of certain tRNAs, forming tRNA-cmnm(5)s(2)U34. This Escherichia coli O6:K15:H31 (strain 536 / UPEC) protein is tRNA modification GTPase MnmE.